We begin with the raw amino-acid sequence, 37 residues long: Large ribosomal subunit protein bL36 (37 aa).

Belongs to the bacterial ribosomal protein bL36 family.

The sequence is that of Large ribosomal subunit protein bL36 from Metamycoplasma arthritidis (strain 158L3-1) (Mycoplasma arthritidis).